A 513-amino-acid chain; its full sequence is Glutamyl-tRNA(Gln) amidotransferase subunit A (513 aa).

Residues lysine 85 and serine 160 each act as charge relay system in the active site. Serine 184 functions as the Acyl-ester intermediate in the catalytic mechanism.

It belongs to the amidase family. GatA subfamily. Heterotrimer of A, B and C subunits.

It carries out the reaction L-glutamyl-tRNA(Gln) + L-glutamine + ATP + H2O = L-glutaminyl-tRNA(Gln) + L-glutamate + ADP + phosphate + H(+). In terms of biological role, allows the formation of correctly charged Gln-tRNA(Gln) through the transamidation of misacylated Glu-tRNA(Gln) in organisms which lack glutaminyl-tRNA synthetase. The reaction takes place in the presence of glutamine and ATP through an activated gamma-phospho-Glu-tRNA(Gln). The polypeptide is Glutamyl-tRNA(Gln) amidotransferase subunit A (Bifidobacterium longum (strain NCC 2705)).